The sequence spans 345 residues: Dihydroorotase (345 aa).

Residues His-13 and His-15 each contribute to the Zn(2+) site. Substrate contacts are provided by residues 15-17 (HLR) and Asn-41. Residues Lys-99, His-136, and His-174 each coordinate Zn(2+). The residue at position 99 (Lys-99) is an N6-carboxylysine. His-136 serves as a coordination point for substrate. Leu-219 serves as a coordination point for substrate. Residue Asp-247 coordinates Zn(2+). Asp-247 is a catalytic residue. Substrate is bound by residues His-251 and Ala-263.

The protein belongs to the metallo-dependent hydrolases superfamily. DHOase family. Class II DHOase subfamily. Homodimer. It depends on Zn(2+) as a cofactor.

It carries out the reaction (S)-dihydroorotate + H2O = N-carbamoyl-L-aspartate + H(+). The protein operates within pyrimidine metabolism; UMP biosynthesis via de novo pathway; (S)-dihydroorotate from bicarbonate: step 3/3. Functionally, catalyzes the reversible cyclization of carbamoyl aspartate to dihydroorotate. This Hahella chejuensis (strain KCTC 2396) protein is Dihydroorotase.